The following is a 571-amino-acid chain: Dual specificity testis-specific protein kinase 2 (571 aa).

In terms of domain architecture, Protein kinase spans 58-313 (DFTCEKIGSG…EIGKTLEEIL (256 aa)). ATP contacts are provided by residues 64 to 72 (IGSGFFSEV) and Lys-87. Residue Asp-176 is the Proton acceptor of the active site. The residue at position 219 (Ser-219) is a Phosphoserine; by autocatalysis. Ser-369, Ser-456, and Ser-460 each carry phosphoserine. Residues 521–571 (ENGFGSRPQGTSPCPAGASEEMEVEERPAGSTPATFSTSGIGLQTQGKQDG) form a disordered region. Residues 552 to 571 (TPATFSTSGIGLQTQGKQDG) show a composition bias toward polar residues.

It belongs to the protein kinase superfamily. TKL Ser/Thr protein kinase family. Mg(2+) serves as cofactor. It depends on Mn(2+) as a cofactor. Predominantly expressed in testis and prostate. Found predominantly in non-germinal Sertoli cells.

It localises to the nucleus. It catalyses the reaction L-seryl-[protein] + ATP = O-phospho-L-seryl-[protein] + ADP + H(+). It carries out the reaction L-threonyl-[protein] + ATP = O-phospho-L-threonyl-[protein] + ADP + H(+). The enzyme catalyses L-tyrosyl-[protein] + ATP = O-phospho-L-tyrosyl-[protein] + ADP + H(+). Its activity is regulated as follows. Activated by autophosphorylation on Ser-219. Its function is as follows. Dual specificity protein kinase activity catalyzing autophosphorylation and phosphorylation of exogenous substrates on both serine/threonine and tyrosine residues. Phosphorylates cofilin at 'Ser-3'. May play an important role in spermatogenesis. The polypeptide is Dual specificity testis-specific protein kinase 2 (TESK2) (Homo sapiens (Human)).